A 1311-amino-acid chain; its full sequence is Sterol regulatory element-binding protein cleavage-activating protein (1311 aa).

Over 1–18 the chain is Cytoplasmic; sequence MPLIDKLRERISRAFYSH. A helical membrane pass occupies residues 19–39; the sequence is GLLCASYPIPIIILTALCILA. The Lumenal segment spans residues 40 to 277; sequence SCYPLLKLPL…HIVHVHFKEE (238 aa). The interval 46 to 282 is loop-1; it reads KLPLPGTGPV…HFKEEIGIAE (237 aa). Asn242 and Asn261 each carry an N-linked (GlcNAc...) asparagine glycan. The helical transmembrane segment at 278–298 threads the bilayer; it reads IGIAELIPLVTTYIILFAYIY. The region spanning 282–440 is the SSD domain; it reads ELIPLVTTYI…MFFFTTVLSI (159 aa). At 299-310 the chain is on the cytoplasmic side; it reads FSTRKIDLVKSK. The chain crosses the membrane as a helical span at residues 311–331; that stretch reads WGLALAAVVTVLSSLLMSVGL. At 332 to 342 the chain is on the lumenal side; it reads CTLFGLTPTLN. A helical transmembrane segment spans residues 343–363; that stretch reads GGEIFPYLVVVIGLENVLVLT. Over 364 to 399 the chain is Cytoplasmic; it reads KSVVSTPVDLEVKLRIAQGLRNESWFIMKNMATELG. Residues 400 to 420 form a helical membrane-spanning segment; the sequence is IILIGYFTLVPAIQEFCLFAV. Position 421 (Val421) is a topological domain, lumenal. The helical transmembrane segment at 422 to 442 threads the bilayer; that stretch reads GLVSDFFLQMFFFTTVLSIDI. The Cytoplasmic segment spans residues 443–512; sequence RRMELADLNK…FFARTRLAQR (70 aa). Residues 445-450 carry the ER export signal motif; that stretch reads MELADL. Residues 513–533 form a helical membrane-spanning segment; sequence IIMAGTVVWIGILVYTDPAGL. The loop-7 stretch occupies residues 529-726; it reads DPAGLRNYLT…QTPADVTLYK (198 aa). The Lumenal segment spans residues 534-723; the sequence is RNYLTVHVTE…TENQTPADVT (190 aa). 2 N-linked (GlcNAc...) asparagine glycosylation sites follow: Asn583 and Asn651. The chain crosses the membrane as a helical span at residues 724-744; sequence LYKVAALGLASGIFLVLFFFL. The Cytoplasmic portion of the chain corresponds to 745–1311; that stretch reads LYRLLCPKNY…YVPSVLEKLD (567 aa). Positions 747 to 1311 are interaction with srebf; sequence RLLCPKNYGQ…YVPSVLEKLD (565 aa). WD repeat units lie at residues 790–827, 997–1034, 1037–1076, 1109–1146, 1149–1187, 1190–1227, and 1230–1267; these read GHHM…CLTI, SFES…LRCS, DGQS…NQLQ, AHRK…CLFT, GHSG…RVSH, GHRG…KLYS, and QDLG…LLQT.

It belongs to the WD repeat SCAP family. Membrane region forms a homotetramer. Component of the SCAP-SREBP complex (composed of SCAP and srebf1/srebp1 or srebf2/srebp2). Forms a ternary complex with insig1 or insig2 through its transmembrane domains at high sterol concentrations. Interacts with the SEC23-SEC24 complex.

Its subcellular location is the endoplasmic reticulum membrane. The protein resides in the golgi apparatus membrane. The protein localises to the cytoplasmic vesicle. It is found in the COPII-coated vesicle membrane. In terms of biological role, escort protein required for cholesterol as well as lipid homeostasis. Regulates export of the SCAP-SREBP complex from the endoplasmic reticulum to the Golgi upon low cholesterol, thereby regulating the processing of sterol regulatory element-binding proteins (SREBPs) SREBF1/SREBP1 and SREBF2/SREBP2. At high sterol concentrations, formation of a ternary complex with INSIG (INSIG1 or INSIG2) leads to mask the ER export signal in SCAP, promoting retention of the complex in the endoplasmic reticulum. Low sterol concentrations trigger release of INSIG, a conformational change in the SSD domain of SCAP, unmasking of the ER export signal, promoting recruitment into COPII-coated vesicles and transport of the SCAP-SREBP to the Golgi: in the Golgi, SREBPs are then processed, releasing the transcription factor fragment of SREBPs from the membrane, its import into the nucleus and up-regulation of LDLR, INSIG1 and the mevalonate pathway. Binds cholesterol via its SSD domain. This is Sterol regulatory element-binding protein cleavage-activating protein from Xenopus laevis (African clawed frog).